We begin with the raw amino-acid sequence, 277 residues long: Ribosomal RNA small subunit methyltransferase A (277 aa).

S-adenosyl-L-methionine contacts are provided by H20, L22, G47, E71, D94, and N116.

Belongs to the class I-like SAM-binding methyltransferase superfamily. rRNA adenine N(6)-methyltransferase family. RsmA subfamily.

It localises to the cytoplasm. It catalyses the reaction adenosine(1518)/adenosine(1519) in 16S rRNA + 4 S-adenosyl-L-methionine = N(6)-dimethyladenosine(1518)/N(6)-dimethyladenosine(1519) in 16S rRNA + 4 S-adenosyl-L-homocysteine + 4 H(+). In terms of biological role, specifically dimethylates two adjacent adenosines (A1518 and A1519) in the loop of a conserved hairpin near the 3'-end of 16S rRNA in the 30S particle. May play a critical role in biogenesis of 30S subunits. In Burkholderia sp, this protein is Ribosomal RNA small subunit methyltransferase A.